The following is a 208-amino-acid chain: Uracil phosphoribosyltransferase (208 aa).

5-phospho-alpha-D-ribose 1-diphosphate contacts are provided by residues R78, R103, and 130 to 138 (DPMLATANS). Uracil is bound by residues I193 and 198-200 (GDA). D199 serves as a coordination point for 5-phospho-alpha-D-ribose 1-diphosphate.

Belongs to the UPRTase family. Mg(2+) serves as cofactor.

The enzyme catalyses UMP + diphosphate = 5-phospho-alpha-D-ribose 1-diphosphate + uracil. It functions in the pathway pyrimidine metabolism; UMP biosynthesis via salvage pathway; UMP from uracil: step 1/1. With respect to regulation, allosterically activated by GTP. Functionally, catalyzes the conversion of uracil and 5-phospho-alpha-D-ribose 1-diphosphate (PRPP) to UMP and diphosphate. This chain is Uracil phosphoribosyltransferase, found in Brucella canis (strain ATCC 23365 / NCTC 10854 / RM-666).